A 228-amino-acid polypeptide reads, in one-letter code: ATP synthase subunit beta, mitochondrial (228 aa).

Residues 1–31 (MFALRAAAKADKNLLPFLGQLSRSHAAKAAK) constitute a mitochondrion transit peptide. 183-190 (GGAGVGKT) serves as a coordination point for ATP.

Belongs to the ATPase alpha/beta chains family. In terms of assembly, F-type ATPases have 2 components, CF(1) - the catalytic core - and CF(0) - the membrane proton channel. CF(1) has five subunits: alpha(3), beta(3), gamma(1), delta(1), epsilon(1). CF(0) has three main subunits: a, b and c.

Its subcellular location is the mitochondrion. The protein resides in the mitochondrion inner membrane. The catalysed reaction is ATP + H2O + 4 H(+)(in) = ADP + phosphate + 5 H(+)(out). Functionally, mitochondrial membrane ATP synthase (F(1)F(0) ATP synthase or Complex V) produces ATP from ADP in the presence of a proton gradient across the membrane which is generated by electron transport complexes of the respiratory chain. F-type ATPases consist of two structural domains, F(1) - containing the extramembraneous catalytic core, and F(0) - containing the membrane proton channel, linked together by a central stalk and a peripheral stalk. During catalysis, ATP synthesis in the catalytic domain of F(1) is coupled via a rotary mechanism of the central stalk subunits to proton translocation. Subunits alpha and beta form the catalytic core in F(1). Rotation of the central stalk against the surrounding alpha(3)beta(3) subunits leads to hydrolysis of ATP in three separate catalytic sites on the beta subunits. This is ATP synthase subunit beta, mitochondrial from Drosophila virilis (Fruit fly).